The chain runs to 287 residues: Bifunctional protein FolD (287 aa).

Residues 169–171 (GRS) and Ser-194 contribute to the NADP(+) site.

It belongs to the tetrahydrofolate dehydrogenase/cyclohydrolase family. In terms of assembly, homodimer.

The catalysed reaction is (6R)-5,10-methylene-5,6,7,8-tetrahydrofolate + NADP(+) = (6R)-5,10-methenyltetrahydrofolate + NADPH. It catalyses the reaction (6R)-5,10-methenyltetrahydrofolate + H2O = (6R)-10-formyltetrahydrofolate + H(+). Its pathway is one-carbon metabolism; tetrahydrofolate interconversion. Functionally, catalyzes the oxidation of 5,10-methylenetetrahydrofolate to 5,10-methenyltetrahydrofolate and then the hydrolysis of 5,10-methenyltetrahydrofolate to 10-formyltetrahydrofolate. This Albidiferax ferrireducens (strain ATCC BAA-621 / DSM 15236 / T118) (Rhodoferax ferrireducens) protein is Bifunctional protein FolD.